The following is an 883-amino-acid chain: Alanine--tRNA ligase (883 aa).

Residues His-565, His-569, Cys-675, and His-679 each contribute to the Zn(2+) site.

It belongs to the class-II aminoacyl-tRNA synthetase family. It depends on Zn(2+) as a cofactor.

It localises to the cytoplasm. It carries out the reaction tRNA(Ala) + L-alanine + ATP = L-alanyl-tRNA(Ala) + AMP + diphosphate. Functionally, catalyzes the attachment of alanine to tRNA(Ala) in a two-step reaction: alanine is first activated by ATP to form Ala-AMP and then transferred to the acceptor end of tRNA(Ala). Also edits incorrectly charged Ser-tRNA(Ala) and Gly-tRNA(Ala) via its editing domain. In Rhodospirillum rubrum (strain ATCC 11170 / ATH 1.1.1 / DSM 467 / LMG 4362 / NCIMB 8255 / S1), this protein is Alanine--tRNA ligase.